The following is a 431-amino-acid chain: Adenylosuccinate synthetase (431 aa).

GTP-binding positions include 12 to 18 (GDEGKGK) and 40 to 42 (GHT). Aspartate 13 acts as the Proton acceptor in catalysis. Mg(2+) contacts are provided by aspartate 13 and glycine 40. IMP-binding positions include 13–16 (DEGK), 38–41 (NAGH), threonine 130, arginine 144, glutamine 225, threonine 240, and arginine 304. The Proton donor role is filled by histidine 41. Substrate is bound at residue 300 to 306 (ATTGRPR). Residues arginine 306, 332-334 (KLD), and 414-416 (SVG) each bind GTP.

Belongs to the adenylosuccinate synthetase family. As to quaternary structure, homodimer. Mg(2+) serves as cofactor.

It localises to the cytoplasm. The catalysed reaction is IMP + L-aspartate + GTP = N(6)-(1,2-dicarboxyethyl)-AMP + GDP + phosphate + 2 H(+). The protein operates within purine metabolism; AMP biosynthesis via de novo pathway; AMP from IMP: step 1/2. Plays an important role in the de novo pathway of purine nucleotide biosynthesis. Catalyzes the first committed step in the biosynthesis of AMP from IMP. This is Adenylosuccinate synthetase from Geotalea uraniireducens (strain Rf4) (Geobacter uraniireducens).